Here is a 142-residue protein sequence, read N- to C-terminus: uncharacterized protein (142 aa).

This is an uncharacterized protein from Acanthamoeba polyphaga (Amoeba).